Here is a 410-residue protein sequence, read N- to C-terminus: Mating-type locus allele B3 protein (410 aa).

Residues 1–110 (MSRDPKLSLS…ANVVSPGEGC (110 aa)) are variable domain between B alleles. Positions 107-184 (GEGCRNLSED…NARRRSGWSH (78 aa)) form a DNA-binding region, homeobox; TALE-type. A highly conserved between B alleles region spans residues 111–410 (RNLSEDLPAY…PFLCLSVAFV (300 aa)). Disordered regions lie at residues 203–224 (AKLSSSNQSTPPSLTSEKPSDD) and 278–335 (TPKP…TPEL). Positions 205 to 219 (LSSSNQSTPPSLTSE) are enriched in polar residues. Positions 276–308 (KKTPKPGMPRPVTTVAKRHPARKTKPAAKPKSR) match the Nuclear localization signal motif. A compositionally biased stretch (basic residues) spans 291–307 (AKRHPARKTKPAAKPKS). Residues 312–335 (PRASTTPSIDSTLDSSKLESTPEL) show a composition bias toward polar residues. Residues 333–410 (PELSMCSTAD…PFLCLSVAFV (78 aa)) form a not essential for B3 function region.

The protein belongs to the TALE/M-ATYP homeobox family.

It localises to the nucleus. In terms of biological role, the B locus has at least 25 alleles, and any combination of two different B alleles yields a multimeric regulatory protein, that activates genes responsible for the pathogenicity and for the sexual development of the fungus within the corn plant. The chain is Mating-type locus allele B3 protein from Mycosarcoma maydis (Corn smut fungus).